A 337-amino-acid chain; its full sequence is Ketol-acid reductoisomerase (NADP(+)) (337 aa).

Residues 3-183 form the KARI N-terminal Rossmann domain; the sequence is VEVFYDDDAD…GGTRAGVIKT (181 aa). Residues 26-29, S52, S54, and 84-87 each bind NADP(+); these read YGSQ and DTAQ. The active site involves H109. NADP(+) is bound at residue G135. The KARI C-terminal knotted domain occupies 184 to 329; it reads TFTEETETDL…GRLRAMMSWV (146 aa). Positions 192, 196, 228, and 232 each coordinate Mg(2+). S253 contributes to the substrate binding site.

It belongs to the ketol-acid reductoisomerase family. The cofactor is Mg(2+).

The catalysed reaction is (2R)-2,3-dihydroxy-3-methylbutanoate + NADP(+) = (2S)-2-acetolactate + NADPH + H(+). It carries out the reaction (2R,3R)-2,3-dihydroxy-3-methylpentanoate + NADP(+) = (S)-2-ethyl-2-hydroxy-3-oxobutanoate + NADPH + H(+). The protein operates within amino-acid biosynthesis; L-isoleucine biosynthesis; L-isoleucine from 2-oxobutanoate: step 2/4. Its pathway is amino-acid biosynthesis; L-valine biosynthesis; L-valine from pyruvate: step 2/4. Its function is as follows. Involved in the biosynthesis of branched-chain amino acids (BCAA). Catalyzes an alkyl-migration followed by a ketol-acid reduction of (S)-2-acetolactate (S2AL) to yield (R)-2,3-dihydroxy-isovalerate. In the isomerase reaction, S2AL is rearranged via a Mg-dependent methyl migration to produce 3-hydroxy-3-methyl-2-ketobutyrate (HMKB). In the reductase reaction, this 2-ketoacid undergoes a metal-dependent reduction by NADPH to yield (R)-2,3-dihydroxy-isovalerate. This chain is Ketol-acid reductoisomerase (NADP(+)), found in Salinispora tropica (strain ATCC BAA-916 / DSM 44818 / JCM 13857 / NBRC 105044 / CNB-440).